The primary structure comprises 513 residues: ATP synthase subunit alpha (513 aa).

169 to 176 (GDRQCGKT) is an ATP binding site.

The protein belongs to the ATPase alpha/beta chains family. In terms of assembly, F-type ATPases have 2 components, CF(1) - the catalytic core - and CF(0) - the membrane proton channel. CF(1) has five subunits: alpha(3), beta(3), gamma(1), delta(1), epsilon(1). CF(0) has three main subunits: a(1), b(2) and c(9-12). The alpha and beta chains form an alternating ring which encloses part of the gamma chain. CF(1) is attached to CF(0) by a central stalk formed by the gamma and epsilon chains, while a peripheral stalk is formed by the delta and b chains.

The protein resides in the cell inner membrane. The enzyme catalyses ATP + H2O + 4 H(+)(in) = ADP + phosphate + 5 H(+)(out). Produces ATP from ADP in the presence of a proton gradient across the membrane. The alpha chain is a regulatory subunit. This chain is ATP synthase subunit alpha, found in Burkholderia ambifaria (strain MC40-6).